Consider the following 137-residue polypeptide: Large ribosomal subunit protein uL22 (137 aa).

This sequence belongs to the universal ribosomal protein uL22 family. As to quaternary structure, part of the 50S ribosomal subunit.

In terms of biological role, this protein binds specifically to 23S rRNA; its binding is stimulated by other ribosomal proteins, e.g. L4, L17, and L20. It is important during the early stages of 50S assembly. It makes multiple contacts with different domains of the 23S rRNA in the assembled 50S subunit and ribosome. Functionally, the globular domain of the protein is located near the polypeptide exit tunnel on the outside of the subunit, while an extended beta-hairpin is found that lines the wall of the exit tunnel in the center of the 70S ribosome. The sequence is that of Large ribosomal subunit protein uL22 from Flavobacterium johnsoniae (strain ATCC 17061 / DSM 2064 / JCM 8514 / BCRC 14874 / CCUG 350202 / NBRC 14942 / NCIMB 11054 / UW101) (Cytophaga johnsonae).